The chain runs to 482 residues: Membrane-bound lytic murein transglycosylase F (482 aa).

An N-terminal signal peptide occupies residues 1–18; it reads MKGLFLRIITALALLFWA. Residues 19–267 are non-LT domain; the sequence is IDMVFPWQFL…NLKEKYLGHI (249 aa). Residues 268–482 form an LT domain region; it reads SQFDYVDTRS…NLEEIKENED (215 aa). Glu-312 is an active-site residue. The segment covering 457–470 has biased composition (polar residues); it reads ENQTTNDNANNESA. The disordered stretch occupies residues 457 to 482; it reads ENQTTNDNANNESAVKNLEEIKENED. Positions 473-482 are enriched in basic and acidic residues; that stretch reads NLEEIKENED.

It in the N-terminal section; belongs to the bacterial solute-binding protein 3 family. In the C-terminal section; belongs to the transglycosylase Slt family.

It is found in the cell outer membrane. The enzyme catalyses Exolytic cleavage of the (1-&gt;4)-beta-glycosidic linkage between N-acetylmuramic acid (MurNAc) and N-acetylglucosamine (GlcNAc) residues in peptidoglycan, from either the reducing or the non-reducing ends of the peptidoglycan chains, with concomitant formation of a 1,6-anhydrobond in the MurNAc residue.. In terms of biological role, murein-degrading enzyme that degrades murein glycan strands and insoluble, high-molecular weight murein sacculi, with the concomitant formation of a 1,6-anhydromuramoyl product. Lytic transglycosylases (LTs) play an integral role in the metabolism of the peptidoglycan (PG) sacculus. Their lytic action creates space within the PG sacculus to allow for its expansion as well as for the insertion of various structures such as secretion systems and flagella. The sequence is that of Membrane-bound lytic murein transglycosylase F from Haemophilus influenzae (strain PittGG).